We begin with the raw amino-acid sequence, 146 residues long: Heat-stable 19 kDa antigen (146 aa).

Positions 1–20 (MKFSLLSAIAAAVFVPFTSA) are cleaved as a signal peptide.

The protein belongs to the cerato-platanin family. Glycosylated.

Its subcellular location is the secreted. The chain is Heat-stable 19 kDa antigen (CSA) from Coccidioides posadasii (strain C735) (Valley fever fungus).